Reading from the N-terminus, the 357-residue chain is MAKKPSLSPEEMRREALETALSTIERKYGLGAVMKLSDEAHVAIPVIPTGSIGLDLALGVGGVPRGRVTEIYGPESSGKTTLTLHIIAEAQKRGGTAAFIDAEHALDVAYARRLGVNTEELLISQPDFGEQALDIADMLVRSAAVDLVVIDSVAALIPQAELEGSMGDTQVGGQARLMSHALRKLTGTIHKSRTAVIFINQIRMKIGTMGYGSPETTTGGNALKFYSSVRMDIRKIQTLKDKEEVYGSRTRVKIVKNKVAPPFREALFDILYGTGISRTGEIIDLGSDAGIIDKSGSWFAFGSERLGQGKENVRALLEENAPLREAIEAKLIEHLGMTPTKFASSGEEPANDEENDL.

An ATP-binding site is contributed by 73–80 (GPESSGKT).

This sequence belongs to the RecA family.

It is found in the cytoplasm. Can catalyze the hydrolysis of ATP in the presence of single-stranded DNA, the ATP-dependent uptake of single-stranded DNA by duplex DNA, and the ATP-dependent hybridization of homologous single-stranded DNAs. It interacts with LexA causing its activation and leading to its autocatalytic cleavage. The sequence is that of Protein RecA from Nitratidesulfovibrio vulgaris (strain ATCC 29579 / DSM 644 / CCUG 34227 / NCIMB 8303 / VKM B-1760 / Hildenborough) (Desulfovibrio vulgaris).